We begin with the raw amino-acid sequence, 154 residues long: Lipoprotein signal peptidase (154 aa).

A run of 3 helical transmembrane segments spans residues 8 to 28 (LYLIVSLLVIIADQLLKNYIV), 58 to 78 (IFSGQMILFYLISIAAIAVVI), and 88 to 108 (NGLFDTGLALVLGGIIGNFID). Active-site residues include Asp-117 and Asp-133. The chain crosses the membrane as a helical span at residues 131–151 (IADSAITVGIILVFIYLIFIS).

It belongs to the peptidase A8 family.

It localises to the cell membrane. The catalysed reaction is Release of signal peptides from bacterial membrane prolipoproteins. Hydrolyzes -Xaa-Yaa-Zaa-|-(S,diacylglyceryl)Cys-, in which Xaa is hydrophobic (preferably Leu), and Yaa (Ala or Ser) and Zaa (Gly or Ala) have small, neutral side chains.. It functions in the pathway protein modification; lipoprotein biosynthesis (signal peptide cleavage). This protein specifically catalyzes the removal of signal peptides from prolipoproteins. This Lactobacillus johnsonii (strain CNCM I-12250 / La1 / NCC 533) protein is Lipoprotein signal peptidase.